The sequence spans 389 residues: Succinate--CoA ligase [ADP-forming] subunit beta (389 aa).

The 236-residue stretch at lysine 9–threonine 244 folds into the ATP-grasp domain. ATP is bound by residues lysine 46, glycine 53–glycine 55, glycine 102, and glutamate 107. Residues asparagine 199 and aspartate 213 each contribute to the Mg(2+) site. Substrate contacts are provided by residues asparagine 264 and glycine 321–valine 323.

It belongs to the succinate/malate CoA ligase beta subunit family. In terms of assembly, heterotetramer of two alpha and two beta subunits. Mg(2+) is required as a cofactor.

It catalyses the reaction succinate + ATP + CoA = succinyl-CoA + ADP + phosphate. The enzyme catalyses GTP + succinate + CoA = succinyl-CoA + GDP + phosphate. It functions in the pathway carbohydrate metabolism; tricarboxylic acid cycle; succinate from succinyl-CoA (ligase route): step 1/1. Succinyl-CoA synthetase functions in the citric acid cycle (TCA), coupling the hydrolysis of succinyl-CoA to the synthesis of either ATP or GTP and thus represents the only step of substrate-level phosphorylation in the TCA. The beta subunit provides nucleotide specificity of the enzyme and binds the substrate succinate, while the binding sites for coenzyme A and phosphate are found in the alpha subunit. The sequence is that of Succinate--CoA ligase [ADP-forming] subunit beta from Xanthomonas oryzae pv. oryzae (strain MAFF 311018).